Here is a 256-residue protein sequence, read N- to C-terminus: Ribonuclease HII (256 aa).

The RNase H type-2 domain maps to 72-256 (ALICGIDEVG…SFEPIKSMMK (185 aa)). Positions 78, 79, and 170 each coordinate a divalent metal cation.

This sequence belongs to the RNase HII family. Mn(2+) is required as a cofactor. Requires Mg(2+) as cofactor.

The protein localises to the cytoplasm. It catalyses the reaction Endonucleolytic cleavage to 5'-phosphomonoester.. Endonuclease that specifically degrades the RNA of RNA-DNA hybrids. The chain is Ribonuclease HII from Staphylococcus epidermidis (strain ATCC 12228 / FDA PCI 1200).